Here is a 458-residue protein sequence, read N- to C-terminus: UDP-N-acetylmuramate--L-alanine ligase (458 aa).

118-124 (GTHGKTT) is a binding site for ATP.

The protein belongs to the MurCDEF family.

It is found in the cytoplasm. It catalyses the reaction UDP-N-acetyl-alpha-D-muramate + L-alanine + ATP = UDP-N-acetyl-alpha-D-muramoyl-L-alanine + ADP + phosphate + H(+). It functions in the pathway cell wall biogenesis; peptidoglycan biosynthesis. In terms of biological role, cell wall formation. The chain is UDP-N-acetylmuramate--L-alanine ligase from Clostridium botulinum (strain Loch Maree / Type A3).